Here is a 161-residue protein sequence, read N- to C-terminus: 2-C-methyl-D-erythritol 2,4-cyclodiphosphate synthase (161 aa).

The a divalent metal cation site is built by Asp10 and His12. 4-CDP-2-C-methyl-D-erythritol 2-phosphate-binding positions include 10–12 (DVH) and 36–37 (HS). His44 contacts a divalent metal cation. 4-CDP-2-C-methyl-D-erythritol 2-phosphate is bound by residues 58-60 (DIG), 63-67 (FSDTD), and Arg144.

This sequence belongs to the IspF family. In terms of assembly, homotrimer. The cofactor is a divalent metal cation.

It catalyses the reaction 4-CDP-2-C-methyl-D-erythritol 2-phosphate = 2-C-methyl-D-erythritol 2,4-cyclic diphosphate + CMP. The protein operates within isoprenoid biosynthesis; isopentenyl diphosphate biosynthesis via DXP pathway; isopentenyl diphosphate from 1-deoxy-D-xylulose 5-phosphate: step 4/6. Functionally, involved in the biosynthesis of isopentenyl diphosphate (IPP) and dimethylallyl diphosphate (DMAPP), two major building blocks of isoprenoid compounds. Catalyzes the conversion of 4-diphosphocytidyl-2-C-methyl-D-erythritol 2-phosphate (CDP-ME2P) to 2-C-methyl-D-erythritol 2,4-cyclodiphosphate (ME-CPP) with a corresponding release of cytidine 5-monophosphate (CMP). This Burkholderia lata (strain ATCC 17760 / DSM 23089 / LMG 22485 / NCIMB 9086 / R18194 / 383) protein is 2-C-methyl-D-erythritol 2,4-cyclodiphosphate synthase.